The primary structure comprises 75 residues: UPF0352 protein PMI0824 (75 aa).

This sequence belongs to the UPF0352 family.

This is UPF0352 protein PMI0824 from Proteus mirabilis (strain HI4320).